The primary structure comprises 222 residues: UPF0758 protein YicR (222 aa).

Residues 100-222 form the MPN domain; sequence PLLSPEMTRE…YVSFAERGWI (123 aa). Positions 171, 173, and 184 each coordinate Zn(2+). The JAMM motif motif lies at 171-184; sequence HNHPSGCAEPSKAD.

The protein belongs to the UPF0758 family. YicR subfamily.

The chain is UPF0758 protein YicR from Escherichia coli (strain K12 / MC4100 / BW2952).